A 64-amino-acid chain; its full sequence is Large ribosomal subunit protein bL28 (64 aa).

The tract at residues 1–23 (MARKDQISHRGPLSGNNRSHALN) is disordered.

It belongs to the bacterial ribosomal protein bL28 family.

This chain is Large ribosomal subunit protein bL28, found in Mesomycoplasma hyopneumoniae (strain 232) (Mycoplasma hyopneumoniae).